Consider the following 606-residue polypeptide: UvrABC system protein C (606 aa).

Positions 14 to 93 constitute a GIY-YIG domain; that stretch reads QNPGVYLMKD…IKKHSPRYNV (80 aa). Residues 203–238 enclose the UVR domain; sequence PDLINRLKFEMQTEADLEHFERAAQIRDTILAIQTT.

It belongs to the UvrC family. In terms of assembly, interacts with UvrB in an incision complex.

It localises to the cytoplasm. Functionally, the UvrABC repair system catalyzes the recognition and processing of DNA lesions. UvrC both incises the 5' and 3' sides of the lesion. The N-terminal half is responsible for the 3' incision and the C-terminal half is responsible for the 5' incision. The polypeptide is UvrABC system protein C (Desulforapulum autotrophicum (strain ATCC 43914 / DSM 3382 / VKM B-1955 / HRM2) (Desulfobacterium autotrophicum)).